A 466-amino-acid polypeptide reads, in one-letter code: Purple acid phosphatase 6 (466 aa).

The signal sequence occupies residues 1–20 (MKNLVIFAFLFLSITTVING). Asn-88 carries N-linked (GlcNAc...) asparagine glycosylation. Residue Asp-164 coordinates Fe cation. N-linked (GlcNAc...) asparagine glycosylation is present at Asn-172. Residues Asp-192 and Tyr-195 each contribute to the Fe cation site. Asp-192 contacts Zn(2+). Residues Asn-229 and His-314 each coordinate Zn(2+). Asn-229 lines the substrate pocket. The active-site Proton donor is the His-324. Position 351 (His-351) interacts with Zn(2+). 351-353 (HVH) contributes to the substrate binding site. Fe cation is bound at residue His-353. Asn-367 and Asn-424 each carry an N-linked (GlcNAc...) asparagine glycan.

This sequence belongs to the metallophosphoesterase superfamily. Purple acid phosphatase family. In terms of assembly, homodimer. Fe cation is required as a cofactor. It depends on Zn(2+) as a cofactor. Specifically expressed in flowers.

Its subcellular location is the secreted. The catalysed reaction is a phosphate monoester + H2O = an alcohol + phosphate. The polypeptide is Purple acid phosphatase 6 (PAP6) (Arabidopsis thaliana (Mouse-ear cress)).